A 100-amino-acid chain; its full sequence is Small cysteine and glycine repeat-containing protein 3 (100 aa).

The 13 X 2 AA repeats of CG stretch occupies residues 4–82 (CGCGSCGGCG…RRTCRSCGCG (79 aa)).

This sequence belongs to the KRTAP type 28 family.

In terms of biological role, in the hair cortex, hair keratin intermediate filaments are embedded in an interfilamentous matrix, consisting of hair keratin-associated proteins (KRTAP), which are essential for the formation of a rigid and resistant hair shaft through their extensive disulfide bond cross-linking with abundant cysteine residues of hair keratins. The matrix proteins include the high-sulfur and high-glycine-tyrosine keratins. This is Small cysteine and glycine repeat-containing protein 3 from Homo sapiens (Human).